The chain runs to 290 residues: Agroclavine dehydrogenase (290 aa).

The protein belongs to the fgaFS/easG family. In terms of assembly, monomer.

It catalyses the reaction agroclavine + NADP(+) = didehydroagroclavine + NADPH + H(+). It functions in the pathway alkaloid biosynthesis; ergot alkaloid biosynthesis. Functionally, agroclavine dehydrogenase; part of the gene cluster that mediates the biosynthesis of fungal ergot alkaloid. DmaW catalyzes the first step of ergot alkaloid biosynthesis by condensing dimethylallyl diphosphate (DMAP) and tryptophan to form 4-dimethylallyl-L-tryptophan. The second step is catalyzed by the methyltransferase easF that methylates 4-dimethylallyl-L-tryptophan in the presence of S-adenosyl-L-methionine, resulting in the formation of 4-dimethylallyl-L-abrine. The catalase easC and the FAD-dependent oxidoreductase easE then transform 4-dimethylallyl-L-abrine to chanoclavine-I which is further oxidized by easD in the presence of NAD(+), resulting in the formation of chanoclavine-I aldehyde. Agroclavine dehydrogenase easG then mediates the conversion of chanoclavine-I aldehyde to agroclavine via a non-enzymatic adduct reaction: the substrate is an iminium intermediate that is formed spontaneously from chanoclavine-I aldehyde in the presence of glutathione. The presence of easA is not required to complete this reaction. Further conversion of agroclavine to paspalic acid is a two-step process involving oxidation of agroclavine to elymoclavine and of elymoclavine to paspalic acid, the second step being performed by the elymoclavine oxidase cloA. Paspalic acid is then further converted to D-lysergic acid. Ergopeptines are assembled from D-lysergic acid and three different amino acids by the D-lysergyl-peptide-synthetases composed each of a monomudular and a trimodular nonribosomal peptide synthetase subunit. LpsB and lpsC encode the monomodular subunits responsible for D-lysergic acid activation and incorporation into the ergopeptine backbone. LpsA1 and A2 subunits encode the trimodular nonribosomal peptide synthetase assembling the tripeptide portion of ergopeptines. LpsA1 is responsible for formation of the major ergopeptine, ergotamine, and lpsA2 for alpha-ergocryptine, the minor ergopeptine of the total alkaloid mixture elaborated by C.purpurea. D-lysergyl-tripeptides are assembled by the nonribosomal peptide synthetases and released as N-(D-lysergyl-aminoacyl)-lactams. Cyclolization of the D-lysergyl-tripeptides is performed by the Fe(2+)/2-ketoglutarate-dependent dioxygenase easH which introduces a hydroxyl group into N-(D-lysergyl-aminoacyl)-lactam at alpha-C of the aminoacyl residue followed by spontaneous condensation with the terminal lactam carbonyl group. The polypeptide is Agroclavine dehydrogenase (Claviceps purpurea (strain 20.1) (Ergot fungus)).